Reading from the N-terminus, the 535-residue chain is Berberine bridge enzyme-like 27 (535 aa).

Residues 1–22 (MEILRFLLSLFIYFLLLNLSLS) form the signal peptide. N-linked (GlcNAc...) asparagine glycans are attached at residues Asn18 and Asn66. An intrachain disulfide couples Cys40 to Cys100. The FAD-binding PCMH-type domain maps to 78–253 (ETPKPVSIIT…LSWKIRLLDV (176 aa)). His115 is modified (pros-8alpha-FAD histidine). N-linked (GlcNAc...) asparagine glycans are attached at residues Asn146, Asn215, and Asn439.

The protein belongs to the oxygen-dependent FAD-linked oxidoreductase family. It depends on FAD as a cofactor. Accumulates in cell walls of etiolated hypocotyls.

It is found in the secreted. It localises to the cell wall. This is Berberine bridge enzyme-like 27 from Arabidopsis thaliana (Mouse-ear cress).